We begin with the raw amino-acid sequence, 510 residues long: Probable lysine--tRNA ligase, cytoplasmic (510 aa).

The protein belongs to the class-II aminoacyl-tRNA synthetase family. As to quaternary structure, homodimer.

It localises to the cytoplasm. It catalyses the reaction tRNA(Lys) + L-lysine + ATP = L-lysyl-tRNA(Lys) + AMP + diphosphate. The protein is Probable lysine--tRNA ligase, cytoplasmic of Encephalitozoon cuniculi (strain GB-M1) (Microsporidian parasite).